The following is a 587-amino-acid chain: L-ornithine N(5)-monooxygenase (587 aa).

FAD is bound by residues 53–61 and glutamine 72; that span reads EKHTSFQWH. Lysine 77 contacts substrate. Residue 235 to 238 coordinates NADP(+); sequence GGQS. Substrate-binding positions include 282–285 and asparagine 312; that span reads NEVF. Residue 312–314 participates in NADP(+) binding; it reads NYS. Positions 488–511 are disordered; the sequence is DNSAASGVSGASTPLTSPSEEEGK. The span at 491 to 505 shows a compositional bias: polar residues; the sequence is AASGVSGASTPLTSP. 567–569 contacts FAD; sequence TLL. Serine 570 is a substrate binding site.

This sequence belongs to the lysine N(6)-hydroxylase/L-ornithine N(5)-oxygenase family. As to quaternary structure, homotetramer. FAD is required as a cofactor.

It carries out the reaction L-ornithine + NADPH + O2 = N(5)-hydroxy-L-ornithine + NADP(+) + H2O. The catalysed reaction is L-ornithine + NADH + O2 = N(5)-hydroxy-L-ornithine + NAD(+) + H2O. It participates in siderophore biosynthesis; ferrichrome biosynthesis. Its function is as follows. L-ornithine N(5)-monooxygenase; part of the siderophore biosynthetic pathway. Omphalotus olearius produces ferrichrome A, but no other siderophore has been detected. Ferrichrome A consists of a hexapeptide ring made up of one glycine, two serine, and three N(5)-hydroxyornithine amino acid residues, the latter acylated by trans-(alpha-methyl)-glutaconic acid residues. The biosynthesis of ferrichrome A depends on the hydroxylation of ornithine to N(5)-hydroxyornithine, catalyzed by the monooxygenase omo1. The second step, the acylation of N(5)-hydroxy-L-ornithine is probably catalyzed by the N-acyltransferase ato1. Finally, assembly of ferrichrome A is catalyzed by the nonribosomal peptide synthase (NRPS) fso1. The sequence is that of L-ornithine N(5)-monooxygenase from Omphalotus olearius (Jack o'lantern).